Here is a 139-residue protein sequence, read N- to C-terminus: 3-hydroxyacyl-[acyl-carrier-protein] dehydratase FabZ (139 aa).

H47 is an active-site residue.

The protein belongs to the thioester dehydratase family. FabZ subfamily.

Its subcellular location is the cytoplasm. The enzyme catalyses a (3R)-hydroxyacyl-[ACP] = a (2E)-enoyl-[ACP] + H2O. Functionally, involved in unsaturated fatty acids biosynthesis. Catalyzes the dehydration of short chain beta-hydroxyacyl-ACPs and long chain saturated and unsaturated beta-hydroxyacyl-ACPs. The chain is 3-hydroxyacyl-[acyl-carrier-protein] dehydratase FabZ from Clostridium perfringens (strain ATCC 13124 / DSM 756 / JCM 1290 / NCIMB 6125 / NCTC 8237 / Type A).